Reading from the N-terminus, the 247-residue chain is PF03932 family protein CutC (247 aa).

This sequence belongs to the CutC family.

It is found in the cytoplasm. This Enterobacter sp. (strain 638) protein is PF03932 family protein CutC.